Reading from the N-terminus, the 470-residue chain is Protein nucleotidyltransferase YdiU (470 aa).

ATP-binding residues include Gly-86, Gly-88, Arg-89, Lys-109, Asp-121, Gly-122, Arg-172, and Arg-179. Asp-244 serves as the catalytic Proton acceptor. Mg(2+) contacts are provided by Asn-245 and Asp-254. Asp-254 serves as a coordination point for ATP.

This sequence belongs to the SELO family. It depends on Mg(2+) as a cofactor. Mn(2+) is required as a cofactor.

The enzyme catalyses L-seryl-[protein] + ATP = 3-O-(5'-adenylyl)-L-seryl-[protein] + diphosphate. The catalysed reaction is L-threonyl-[protein] + ATP = 3-O-(5'-adenylyl)-L-threonyl-[protein] + diphosphate. It catalyses the reaction L-tyrosyl-[protein] + ATP = O-(5'-adenylyl)-L-tyrosyl-[protein] + diphosphate. It carries out the reaction L-histidyl-[protein] + UTP = N(tele)-(5'-uridylyl)-L-histidyl-[protein] + diphosphate. The enzyme catalyses L-seryl-[protein] + UTP = O-(5'-uridylyl)-L-seryl-[protein] + diphosphate. The catalysed reaction is L-tyrosyl-[protein] + UTP = O-(5'-uridylyl)-L-tyrosyl-[protein] + diphosphate. Functionally, nucleotidyltransferase involved in the post-translational modification of proteins. It can catalyze the addition of adenosine monophosphate (AMP) or uridine monophosphate (UMP) to a protein, resulting in modifications known as AMPylation and UMPylation. In Roseobacter denitrificans (strain ATCC 33942 / OCh 114) (Erythrobacter sp. (strain OCh 114)), this protein is Protein nucleotidyltransferase YdiU.